Reading from the N-terminus, the 174-residue chain is Small ribosomal subunit protein uS12m (174 aa).

Belongs to the universal ribosomal protein uS12 family. In terms of assembly, component of the mitochondrial small ribosomal subunit (mt-SSU). Mature N.crassa 74S mitochondrial ribosomes consist of a small (37S) and a large (54S) subunit. The 37S small subunit contains a 16S ribosomal RNA (16S mt-rRNA) and 32 different proteins. The 54S large subunit contains a 23S rRNA (23S mt-rRNA) and 42 different proteins. uS12m forms part of the decoding center of the mt-SSU.

Its subcellular location is the mitochondrion. In terms of biological role, component of the mitochondrial ribosome (mitoribosome), a dedicated translation machinery responsible for the synthesis of mitochondrial genome-encoded proteins, including at least some of the essential transmembrane subunits of the mitochondrial respiratory chain. The mitoribosomes are attached to the mitochondrial inner membrane and translation products are cotranslationally integrated into the membrane. This is Small ribosomal subunit protein uS12m (mrps12) from Neurospora crassa (strain ATCC 24698 / 74-OR23-1A / CBS 708.71 / DSM 1257 / FGSC 987).